Consider the following 539-residue polypeptide: Ell-associated factor Eaf (539 aa).

Residues 119-539 (TRSEMTHHKP…SSNSSDDDDD (421 aa)) form a disordered region. Residues 132 to 146 (PATNINHNNIPMSTN) show a composition bias toward polar residues. Residues 151–163 (GPGPGPGSGPSPP) show a composition bias toward pro residues. Residues 174–195 (KLENSTMRISSKTKVSTGSRRN) are compositionally biased toward polar residues. Serine 205 bears the Phosphoserine mark. The segment covering 220-238 (RSPQSAPAWNANNAQQTLP) has biased composition (polar residues). Composition is skewed to low complexity over residues 267–278 (SGSSTGSSTGQP), 309–337 (MHQN…YGRG), and 345–375 (NNYA…SHHS). Positions 420 to 435 (DSSDSDSGSESDDSTD) are enriched in acidic residues. 2 stretches are compositionally biased toward low complexity: residues 461 to 493 (HQQL…QPQQ) and 520 to 533 (NDLL…SSNS).

It belongs to the EAF family.

It is found in the nucleus. Its function is as follows. Promotes transcriptional elongation by Su(Tpl)/ELL. Essential for development. This Drosophila willistoni (Fruit fly) protein is Ell-associated factor Eaf.